A 498-amino-acid polypeptide reads, in one-letter code: Pyridine nucleotide-disulfide oxidoreductase domain-containing protein 1 (498 aa).

M1 is modified (N-acetylmethionine).

This sequence belongs to the class-I pyridine nucleotide-disulfide oxidoreductase family. PYROXD1 subfamily. The cofactor is FAD.

The protein resides in the nucleus. The protein localises to the cytoplasm. Its subcellular location is the myofibril. It is found in the sarcomere. Its function is as follows. Probable FAD-dependent oxidoreductase; involved in the cellular oxidative stress response. Required for normal sarcomere structure and muscle fiber integrity. The sequence is that of Pyridine nucleotide-disulfide oxidoreductase domain-containing protein 1 (Pyroxd1) from Rattus norvegicus (Rat).